We begin with the raw amino-acid sequence, 227 residues long: MKVSYHGHSVVKIETNGKVMLIDPFLTGNPKTDLKAEDVKVDAILLSHGHGDHVGDTVELAKKNNAVVVAPFELATFLSWQGVKTHPMHIGGSHEFDFGKVKFTQAFHGSSYIDEENKTITYTGMPAGILFTAEEKTLYHAGDTALFSDMKLIGELNNVDVAFLPIGDNFTMGPEDAVLAAKWVQAKTVVPMHYNTFPVIEQDPYQFVEKLQNCTGKVLEAGESITL.

Belongs to the UPF0173 family.

The sequence is that of UPF0173 metal-dependent hydrolase BCQ_4418 from Bacillus cereus (strain Q1).